Here is a 1555-residue protein sequence, read N- to C-terminus: Glycogen debranching enzyme (1555 aa).

Ser-87 bears the Phosphoserine mark. Active-site residues include Asp-549, His-552, and Asp-650.

This sequence belongs to the glycogen debranching enzyme family. Monomer. Interacts with NHLRC1/malin. Post-translationally, the N-terminus is blocked. In terms of processing, ubiquitinated.

It localises to the cytoplasm. The enzyme catalyses Transfers a segment of a (1-&gt;4)-alpha-D-glucan to a new position in an acceptor, which may be glucose or a (1-&gt;4)-alpha-D-glucan.. It catalyses the reaction Hydrolysis of (1-&gt;6)-alpha-D-glucosidic branch linkages in glycogen phosphorylase limit dextrin.. Multifunctional enzyme acting as 1,4-alpha-D-glucan:1,4-alpha-D-glucan 4-alpha-D-glycosyltransferase and amylo-1,6-glucosidase in glycogen degradation. The polypeptide is Glycogen debranching enzyme (AGL) (Oryctolagus cuniculus (Rabbit)).